The primary structure comprises 487 residues: Cyclic AMP-dependent transcription factor ATF-2 (487 aa).

Residues F7 to H31 form a C2H2-type zinc finger. Disordered stretches follow at residues E106 to E132 and Q267 to K354. Residues Q298–P319 show a composition bias toward low complexity. Residues A328–R345 are compositionally biased toward basic and acidic residues. The region spanning D334–H397 is the bZIP domain. Residues K336–K356 form a basic motif region. Positions L362 to L390 are leucine-zipper. A Nuclear export signal motif is present at residues V387–A396. The tract at residues K407–S487 is disordered. Residues V425–H436 are compositionally biased toward polar residues. Residues S437–S449 are compositionally biased toward low complexity. The segment covering S457 to E468 has biased composition (polar residues).

This sequence belongs to the bZIP family. ATF subfamily. Binds DNA as a dimer and can form a homodimer in the absence of DNA. Can form a heterodimer with JUN. Heterodimerization is essential for its transcriptional activity.

It is found in the nucleus. Its subcellular location is the cytoplasm. It localises to the mitochondrion outer membrane. Its function is as follows. Transcriptional activator which regulates the transcription of various genes, including those involved in anti-apoptosis, cell growth, and DNA damage response. Dependent on its binding partner, binds to CRE (cAMP response element) consensus sequences (5'-TGACGTCA-3') or to AP-1 (activator protein 1) consensus sequences (5'-TGACTCA-3'). The sequence is that of Cyclic AMP-dependent transcription factor ATF-2 (ATF2) from Gallus gallus (Chicken).